The following is a 393-amino-acid chain: MSVKAPITQDVVTIPRKLPEGRINLVGLTRDRMREVLIDHGTPEKQAKMRVGQIWQWIYQWGVRDFEAMTNLAKAYRAQLAEHFTIEIPEVITRLVSEDGTRKYLVRIAGGHEVEVVYIPEEDRGTLCISSQVGCTLTCSFCHTGTQKLVRNLTAAEIVGQVMMARDDLGEWPVPGAPKDETRLLSNIVLMGMGEPLYNFDNVRDAMKIAMDPEGIQLSRRRITLSTSGVVPEIARTAEEIGCLLAISFHATTDEVRDVLVPINKRWNIEELLSALAAYPKVSNSERITFEYVMLDGVNDSDADAHRLLDHIRRYKIPAKINLIPFNEWPGAPYKRSSNNRIRAFANIIYQAGYAAPIRKTRGDDIMAACGQLKSATERARKSKKQIEAETGL.

Residue Glu115 is the Proton acceptor of the active site. The Radical SAM core domain occupies 121–365; sequence EEDRGTLCIS…APIRKTRGDD (245 aa). Cys128 and Cys370 are joined by a disulfide. [4Fe-4S] cluster-binding residues include Cys135, Cys139, and Cys142. S-adenosyl-L-methionine contacts are provided by residues 194-195, Ser226, 248-250, and Asn327; these read GE and SFH. Residue Cys370 is the S-methylcysteine intermediate of the active site.

Belongs to the radical SAM superfamily. RlmN family. The cofactor is [4Fe-4S] cluster.

The protein resides in the cytoplasm. The catalysed reaction is adenosine(2503) in 23S rRNA + 2 reduced [2Fe-2S]-[ferredoxin] + 2 S-adenosyl-L-methionine = 2-methyladenosine(2503) in 23S rRNA + 5'-deoxyadenosine + L-methionine + 2 oxidized [2Fe-2S]-[ferredoxin] + S-adenosyl-L-homocysteine. It catalyses the reaction adenosine(37) in tRNA + 2 reduced [2Fe-2S]-[ferredoxin] + 2 S-adenosyl-L-methionine = 2-methyladenosine(37) in tRNA + 5'-deoxyadenosine + L-methionine + 2 oxidized [2Fe-2S]-[ferredoxin] + S-adenosyl-L-homocysteine. Its function is as follows. Specifically methylates position 2 of adenine 2503 in 23S rRNA and position 2 of adenine 37 in tRNAs. m2A2503 modification seems to play a crucial role in the proofreading step occurring at the peptidyl transferase center and thus would serve to optimize ribosomal fidelity. The protein is Dual-specificity RNA methyltransferase RlmN of Ruegeria pomeroyi (strain ATCC 700808 / DSM 15171 / DSS-3) (Silicibacter pomeroyi).